Consider the following 87-residue polypeptide: Conotoxin Bt15a (87 aa).

Positions 1 to 23 (MEKLTILVLVATVLLAIQVLVQS) are cleaved as a signal peptide. A propeptide spanning residues 24-49 (DGEKPLKRRVKQYAAKRLSALMRGPR) is cleaved from the precursor. Q50 carries the post-translational modification Pyrrolidone carboxylic acid.

This sequence belongs to the conotoxin O2 superfamily. Post-translationally, contains 4 disulfide bonds. Expressed by the venom duct.

It is found in the secreted. This chain is Conotoxin Bt15a, found in Conus betulinus (Beech cone).